A 196-amino-acid chain; its full sequence is UMP-CMP kinase (196 aa).

Position 13–18 (13–18 (GAGKGT)) interacts with ATP. Serine 33 bears the Phosphoserine mark. Residues 33–63 (SAGELLRDERKNPDSQYGELIEKYIKEGKIV) are NMP. Arginine 39 contacts a ribonucleoside 5'-phosphate. Residues lysine 43 and lysine 55 each carry the N6-acetyllysine modification. 61 to 63 (KIV) serves as a coordination point for a ribonucleoside 5'-phosphate. Lysine 73 participates in a covalent cross-link: Glycyl lysine isopeptide (Lys-Gly) (interchain with G-Cter in SUMO2). Residue 93 to 96 (GFPR) coordinates a ribonucleoside 5'-phosphate. Asparagine 100 lines the CMP pocket. An N6-succinyllysine modification is found at lysine 106. An LID region spans residues 133 to 143 (ERGKSSGRSDD). Residue arginine 134 coordinates ATP. Arginine 140 and arginine 151 together coordinate a ribonucleoside 5'-phosphate. Lysine 179 contacts ATP. Serine 180 is modified (phosphoserine).

Belongs to the adenylate kinase family. UMP-CMP kinase subfamily. As to quaternary structure, monomer. Requires Mg(2+) as cofactor. As to expression, ubiquitously expressed.

The protein localises to the nucleus. It localises to the cytoplasm. It catalyses the reaction CMP + ATP = CDP + ADP. The enzyme catalyses dCMP + ATP = dCDP + ADP. The catalysed reaction is UMP + ATP = UDP + ADP. It carries out the reaction a 2'-deoxyribonucleoside 5'-diphosphate + ATP = a 2'-deoxyribonucleoside 5'-triphosphate + ADP. It catalyses the reaction a ribonucleoside 5'-diphosphate + ATP = a ribonucleoside 5'-triphosphate + ADP. Functionally, catalyzes the phosphorylation of pyrimidine nucleoside monophosphates at the expense of ATP. Plays an important role in de novo pyrimidine nucleotide biosynthesis. Has preference for UMP and CMP as phosphate acceptors. Also displays broad nucleoside diphosphate kinase activity. The chain is UMP-CMP kinase from Homo sapiens (Human).